Here is a 194-residue protein sequence, read N- to C-terminus: Acireductone dioxygenase 1 (194 aa).

The disordered stretch occupies residues 1 to 21 (MEAWYMDDSADDQRKPHHRSP). Positions 87, 89, 93, and 132 each coordinate Fe(2+). 4 residues coordinate Ni(2+): His-87, His-89, Glu-93, and His-132.

This sequence belongs to the acireductone dioxygenase (ARD) family. Fe(2+) serves as cofactor. It depends on Ni(2+) as a cofactor.

Its subcellular location is the cytoplasm. The protein resides in the nucleus. The enzyme catalyses 1,2-dihydroxy-5-(methylsulfanyl)pent-1-en-3-one + O2 = 4-methylsulfanyl-2-oxobutanoate + formate + 2 H(+). The catalysed reaction is 1,2-dihydroxy-5-(methylsulfanyl)pent-1-en-3-one + O2 = 3-(methylsulfanyl)propanoate + CO + formate + 2 H(+). Its pathway is amino-acid biosynthesis; L-methionine biosynthesis via salvage pathway; L-methionine from S-methyl-5-thio-alpha-D-ribose 1-phosphate: step 5/6. Its function is as follows. Catalyzes 2 different reactions between oxygen and the acireductone 1,2-dihydroxy-3-keto-5-methylthiopentene (DHK-MTPene) depending upon the metal bound in the active site. Fe-containing acireductone dioxygenase (Fe-ARD) produces formate and 2-keto-4-methylthiobutyrate (KMTB), the alpha-ketoacid precursor of methionine in the methionine recycle pathway. Ni-containing acireductone dioxygenase (Ni-ARD) produces methylthiopropionate, carbon monoxide and formate, and does not lie on the methionine recycle pathway. In Physcomitrium patens (Spreading-leaved earth moss), this protein is Acireductone dioxygenase 1.